Here is a 326-residue protein sequence, read N- to C-terminus: Nine-heme cytochrome c (326 aa).

Residues 1-30 (MRNGTSLLLLAAIALAGAACLTAMGGTAKA) form the signal peptide. Heme is bound by residues histidine 67, histidine 70, cysteine 77, cysteine 80, histidine 81, histidine 82, cysteine 89, cysteine 92, histidine 93, histidine 111, cysteine 127, cysteine 130, histidine 131, cysteine 141, cysteine 144, histidine 145, cysteine 157, cysteine 160, histidine 161, histidine 227, histidine 230, histidine 248, cysteine 255, cysteine 258, histidine 259, histidine 260, cysteine 271, cysteine 274, histidine 275, histidine 294, cysteine 297, cysteine 300, histidine 301, cysteine 314, cysteine 317, and histidine 318.

As to quaternary structure, monomer. In terms of processing, binds 9 heme groups per subunit.

Its subcellular location is the periplasm. In terms of biological role, may form part of a transmembrane redox complex through which electrons are transferred to the cytoplasm for reduction of sulfate. The sequence is that of Nine-heme cytochrome c from Desulfovibrio desulfuricans (strain ATCC 27774 / DSM 6949 / MB).